We begin with the raw amino-acid sequence, 83 residues long: Small ribosomal subunit protein eS21 (83 aa).

This sequence belongs to the eukaryotic ribosomal protein eS21 family. Component of the 40S small ribosomal subunit. Interacts with sta.

The protein resides in the cytoplasm. It is found in the cytosol. It localises to the rough endoplasmic reticulum. Its function is as follows. May be an associated component of the ribosome rather than a core structural subunit. May act as a translation initiation factor. Has a role in regulation of cell proliferation in the hematopoietic organs and the imaginal disks of larva. In Drosophila erecta (Fruit fly), this protein is Small ribosomal subunit protein eS21 (RpS21).